We begin with the raw amino-acid sequence, 56 residues long: Endoregulin (56 aa).

Residues 25–45 (LTVIGLFTSTFLLFVLFAVVF) form a helical membrane-spanning segment.

In terms of assembly, homooligomer. Can also form heterooligomers with other sarcoplasmic/endoplasmic reticulum calcium ATPase (SERCA) regulators ARLN, PLN, SLN and STRIT1/DWORF. Monomer. Interacts as a monomer with ATP2A2/SERCA2; the interaction results in inhibition of ATP2A2 Ca(2+) affinity. Largely expressed in non-muscle tissues with the exception of weak expression in body wall muscles at 14.5 dpc. Expressed in epithelial cells of the trachea, bronchus, lung, intestine, pancreas, and liver.

It is found in the endoplasmic reticulum membrane. In terms of biological role, inhibits the activity of the calcium ATPases ATP2A2/SERCA2 and ATP2A3/SERCA3 by decreasing their apparent affinity for Ca(2+). The sequence is that of Endoregulin (Erln) from Mus musculus (Mouse).